Consider the following 233-residue polypeptide: Large ribosomal subunit protein uL1 (233 aa).

The protein belongs to the universal ribosomal protein uL1 family. As to quaternary structure, part of the 50S ribosomal subunit.

Functionally, binds directly to 23S rRNA. The L1 stalk is quite mobile in the ribosome, and is involved in E site tRNA release. Its function is as follows. Protein L1 is also a translational repressor protein, it controls the translation of the L11 operon by binding to its mRNA. The chain is Large ribosomal subunit protein uL1 from Rhizobium johnstonii (strain DSM 114642 / LMG 32736 / 3841) (Rhizobium leguminosarum bv. viciae).